Here is a 614-residue protein sequence, read N- to C-terminus: UvrABC system protein C (614 aa).

Residues 26 to 104 form the GIY-YIG domain; that stretch reads NLPGVYKMLG…IKEHRPPYNV (79 aa). Residues 215–250 form the UVR domain; sequence SDIHTTLIEKMEHSAEALDFEKAAFYRDQLSMLREV.

This sequence belongs to the UvrC family. As to quaternary structure, interacts with UvrB in an incision complex.

The protein localises to the cytoplasm. Its function is as follows. The UvrABC repair system catalyzes the recognition and processing of DNA lesions. UvrC both incises the 5' and 3' sides of the lesion. The N-terminal half is responsible for the 3' incision and the C-terminal half is responsible for the 5' incision. The sequence is that of UvrABC system protein C from Psychrobacter sp. (strain PRwf-1).